A 671-amino-acid chain; its full sequence is UvrABC system protein B (671 aa).

In terms of domain architecture, Helicase ATP-binding spans 26–183 (EGLENGLAHQ…RRLSELQYSR (158 aa)). 39 to 46 (GVTGSGKT) provides a ligand contact to ATP. The Beta-hairpin motif lies at 92–115 (YYDYYQPEAYVPSSDTFIEKDASV). The Helicase C-terminal domain occupies 431–593 (QVDDLLSEIR…IIPQGLNKKI (163 aa)). The 36-residue stretch at 631–666 (DQKIRELEAKMYTYAQNLEFEQAAELRDQVHQLRQQ) folds into the UVR domain.

It belongs to the UvrB family. Forms a heterotetramer with UvrA during the search for lesions. Interacts with UvrC in an incision complex.

Its subcellular location is the cytoplasm. Functionally, the UvrABC repair system catalyzes the recognition and processing of DNA lesions. A damage recognition complex composed of 2 UvrA and 2 UvrB subunits scans DNA for abnormalities. Upon binding of the UvrA(2)B(2) complex to a putative damaged site, the DNA wraps around one UvrB monomer. DNA wrap is dependent on ATP binding by UvrB and probably causes local melting of the DNA helix, facilitating insertion of UvrB beta-hairpin between the DNA strands. Then UvrB probes one DNA strand for the presence of a lesion. If a lesion is found the UvrA subunits dissociate and the UvrB-DNA preincision complex is formed. This complex is subsequently bound by UvrC and the second UvrB is released. If no lesion is found, the DNA wraps around the other UvrB subunit that will check the other stand for damage. The polypeptide is UvrABC system protein B (Yersinia pestis bv. Antiqua (strain Antiqua)).